The chain runs to 241 residues: Probable transcriptional regulatory protein RSc2190 (241 aa).

Belongs to the TACO1 family.

It localises to the cytoplasm. The sequence is that of Probable transcriptional regulatory protein RSc2190 from Ralstonia nicotianae (strain ATCC BAA-1114 / GMI1000) (Ralstonia solanacearum).